Consider the following 622-residue polypeptide: Putative E3 ubiquitin-protein ligase ORTHRUS 4 (622 aa).

The PHD-type zinc-finger motif lies at 12-62 (DGVCMRCQVTPPSEETLTCGTCVTPWHVSCLLPESLASSTGDWECPDCSGV). The segment at 129 to 169 (CSICIQLPERPVTTPCGHNFCLKCFEKWAVGQGKLTCMICR) adopts an RING-type 1 zinc-finger fold. Residues 258 to 407 (TRNQGVLVGE…HKMCRYLFVR (150 aa)) form the YDG domain. The segment at 498 to 555 (CQICRKVLSLPVTTPCAHNFCKACLEAKFAGITQLRDRSNGVRKLRAKKNIMTCPCCT) adopts an RING-type 2 zinc-finger fold. The stretch at 566–602 (QVNREMMEIIENFKKSEEEAEVAESSNISEEEEEESE) forms a coiled coil. A disordered region spans residues 579 to 622 (KKSEEEAEVAESSNISEEEEEESEPPTKKIKMDNNSVGDTSLSA). Over residues 611 to 622 (DNNSVGDTSLSA) the composition is skewed to polar residues.

It localises to the nucleus. The enzyme catalyses S-ubiquitinyl-[E2 ubiquitin-conjugating enzyme]-L-cysteine + [acceptor protein]-L-lysine = [E2 ubiquitin-conjugating enzyme]-L-cysteine + N(6)-ubiquitinyl-[acceptor protein]-L-lysine.. It participates in protein modification; protein ubiquitination. Functionally, E3 ubiquitin-protein ligase. May participate in CpG methylation-dependent transcriptional regulation. The protein is Putative E3 ubiquitin-protein ligase ORTHRUS 4 (ORTH4) of Arabidopsis thaliana (Mouse-ear cress).